A 216-amino-acid polypeptide reads, in one-letter code: Large ribosomal subunit protein bL25 (216 aa).

The interval 184-216 (VPPTSDVEEEEGDEDLEEDVEETAAEEEEGVEE) is disordered. The span at 189-216 (DVEEEEGDEDLEEDVEETAAEEEEGVEE) shows a compositional bias: acidic residues.

The protein belongs to the bacterial ribosomal protein bL25 family. CTC subfamily. In terms of assembly, part of the 50S ribosomal subunit; part of the 5S rRNA/L5/L18/L25 subcomplex. Contacts the 5S rRNA. Binds to the 5S rRNA independently of L5 and L18.

This is one of the proteins that binds to the 5S RNA in the ribosome where it forms part of the central protuberance. The protein is Large ribosomal subunit protein bL25 of Desulforapulum autotrophicum (strain ATCC 43914 / DSM 3382 / VKM B-1955 / HRM2) (Desulfobacterium autotrophicum).